The chain runs to 213 residues: MSRNSYIQQSSDIQAAGGLVPMVIEQSARGERAYDIYSRLLKERVIFLVGPVEDYMANLVVAQLLFLEAENPDKDIHLYINSPGGSVTAGMSIYDTMQFIKPDVSTICIGQACSMGAFLLAAGAKGKRHCLPNSRVMIHQPLGGFQGQATDIEIHAQEILNIKARLNELLAYHTGQDLETIKRDTERDNFMSASRAAEYGLIDSVYDKRQLAS.

The active-site Nucleophile is the Ser114. His139 is a catalytic residue.

It belongs to the peptidase S14 family. In terms of assembly, fourteen ClpP subunits assemble into 2 heptameric rings which stack back to back to give a disk-like structure with a central cavity, resembling the structure of eukaryotic proteasomes.

The protein localises to the cytoplasm. The catalysed reaction is Hydrolysis of proteins to small peptides in the presence of ATP and magnesium. alpha-casein is the usual test substrate. In the absence of ATP, only oligopeptides shorter than five residues are hydrolyzed (such as succinyl-Leu-Tyr-|-NHMec, and Leu-Tyr-Leu-|-Tyr-Trp, in which cleavage of the -Tyr-|-Leu- and -Tyr-|-Trp bonds also occurs).. In terms of biological role, cleaves peptides in various proteins in a process that requires ATP hydrolysis. Has a chymotrypsin-like activity. Plays a major role in the degradation of misfolded proteins. This chain is ATP-dependent Clp protease proteolytic subunit, found in Pseudomonas putida (strain ATCC 47054 / DSM 6125 / CFBP 8728 / NCIMB 11950 / KT2440).